The primary structure comprises 192 residues: Small ribosomal subunit protein uS5 (192 aa).

The 64-residue stretch at 20 to 83 folds into the S5 DRBM domain; it reads FVDRLVHINR…EAAKRGLIRV (64 aa). Positions 165–192 are disordered; sequence ARRGLKVSALQARRRDAEPGSADSADAA.

Belongs to the universal ribosomal protein uS5 family. As to quaternary structure, part of the 30S ribosomal subunit. Contacts proteins S4 and S8.

With S4 and S12 plays an important role in translational accuracy. Its function is as follows. Located at the back of the 30S subunit body where it stabilizes the conformation of the head with respect to the body. The protein is Small ribosomal subunit protein uS5 of Methylobacterium sp. (strain 4-46).